The following is a 348-amino-acid chain: Eukaryotic translation initiation factor 3 subunit H (348 aa).

Residues valine 35 to leucine 169 enclose the MPN domain. Residues glutamine 267 to glutamine 285 are compositionally biased toward low complexity. The segment at glutamine 267 to glutamate 311 is disordered.

It belongs to the eIF-3 subunit H family. Component of the eukaryotic translation initiation factor 3 (eIF-3) complex, which is composed of 13 subunits: EIF3A, EIF3B, EIF3C, EIF3D, EIF3E, EIF3F, EIF3G, EIF3H, EIF3I, EIF3J, EIF3K, EIF3L and EIF3M.

It localises to the cytoplasm. Component of the eukaryotic translation initiation factor 3 (eIF-3) complex, which is involved in protein synthesis of a specialized repertoire of mRNAs and, together with other initiation factors, stimulates binding of mRNA and methionyl-tRNAi to the 40S ribosome. The eIF-3 complex specifically targets and initiates translation of a subset of mRNAs involved in cell proliferation. This is Eukaryotic translation initiation factor 3 subunit H from Taeniopygia guttata (Zebra finch).